Consider the following 689-residue polypeptide: DNA topoisomerase 1 (689 aa).

The Toprim domain occupies 3–113 (DNLVIVESPA…KENRVVFNEI (111 aa)). Mg(2+) contacts are provided by E9 and D82. The Topo IA-type catalytic domain maps to 129–557 (EMNLVDAQQA…FFSSFKQDVE (429 aa)). The interaction with DNA stretch occupies residues 163-168 (SAGRVQ). Y298 functions as the O-(5'-phospho-DNA)-tyrosine intermediate in the catalytic mechanism. The interval 328-357 (SKRKASGKQGDQDAHEAIRPSSTMRTPDDM) is disordered. C4-type zinc fingers lie at residues 577 to 603 (CEVC…FPDC), 617 to 645 (CPKC…YPEC), and 658 to 681 (CPKC…CSNC).

Belongs to the type IA topoisomerase family. Monomer. It depends on Mg(2+) as a cofactor.

It carries out the reaction ATP-independent breakage of single-stranded DNA, followed by passage and rejoining.. Functionally, releases the supercoiling and torsional tension of DNA, which is introduced during the DNA replication and transcription, by transiently cleaving and rejoining one strand of the DNA duplex. Introduces a single-strand break via transesterification at a target site in duplex DNA. The scissile phosphodiester is attacked by the catalytic tyrosine of the enzyme, resulting in the formation of a DNA-(5'-phosphotyrosyl)-enzyme intermediate and the expulsion of a 3'-OH DNA strand. The free DNA strand then undergoes passage around the unbroken strand, thus removing DNA supercoils. Finally, in the religation step, the DNA 3'-OH attacks the covalent intermediate to expel the active-site tyrosine and restore the DNA phosphodiester backbone. In Staphylococcus aureus (strain N315), this protein is DNA topoisomerase 1.